The primary structure comprises 294 residues: MGIRTFRPYTPSTRHMTVSNFEELSRDENGKRPRPEKSLLQFIHRKKGRNNRGVITCRHRGGGHKRLYRIIDFRRDKRGIPATVKTIEYDPNRSARICLVEYEDGEKRYILAPRNLEVGATIMAGPDAPFELGNAMPLERIPLGTVVHNVELYPGRGGQIVRAAGAGAQVVAKEGKYVSLKLPSGEVRMIRGECYATIGQVGNVDHSNLSLGKAGRSRWLGRRPHVRGSVMNPVDHPHGGGEGKAPIGRSTPVTPWGKPTLGYKTRKRNKPSNKFIVRGRRRGGRRDKSGRAAQ.

2 disordered regions span residues Met1–Lys37 and Gly228–Gln294. Polar residues predominate over residues Thr10–Glu22. Basic and acidic residues predominate over residues Glu23 to Lys37. Residues Lys264 to Arg285 are compositionally biased toward basic residues.

Belongs to the universal ribosomal protein uL2 family. In terms of assembly, part of the 50S ribosomal subunit. Forms a bridge to the 30S subunit in the 70S ribosome.

One of the primary rRNA binding proteins. Required for association of the 30S and 50S subunits to form the 70S ribosome, for tRNA binding and peptide bond formation. It has been suggested to have peptidyltransferase activity; this is somewhat controversial. Makes several contacts with the 16S rRNA in the 70S ribosome. This is Large ribosomal subunit protein uL2 from Synechococcus sp. (strain JA-3-3Ab) (Cyanobacteria bacterium Yellowstone A-Prime).